Here is a 156-residue protein sequence, read N- to C-terminus: Small ribosomal subunit protein uS7 (156 aa).

Belongs to the universal ribosomal protein uS7 family. In terms of assembly, part of the 30S ribosomal subunit. Contacts proteins S9 and S11.

Functionally, one of the primary rRNA binding proteins, it binds directly to 16S rRNA where it nucleates assembly of the head domain of the 30S subunit. Is located at the subunit interface close to the decoding center, probably blocks exit of the E-site tRNA. This chain is Small ribosomal subunit protein uS7, found in Latilactobacillus sakei subsp. sakei (strain 23K) (Lactobacillus sakei subsp. sakei).